The following is a 230-amino-acid chain: Large ribosomal subunit protein uL1 (230 aa).

The protein belongs to the universal ribosomal protein uL1 family. As to quaternary structure, part of the 50S ribosomal subunit.

In terms of biological role, binds directly to 23S rRNA. The L1 stalk is quite mobile in the ribosome, and is involved in E site tRNA release. Protein L1 is also a translational repressor protein, it controls the translation of the L11 operon by binding to its mRNA. This Lactobacillus johnsonii (strain CNCM I-12250 / La1 / NCC 533) protein is Large ribosomal subunit protein uL1.